The chain runs to 377 residues: Queuine tRNA-ribosyltransferase (377 aa).

Catalysis depends on Asp92, which acts as the Proton acceptor. Substrate is bound by residues 92 to 96 (DSGGF), Asp146, Gln190, and Gly217. Residues 248–254 (GVGRPED) are RNA binding. Asp267 serves as the catalytic Nucleophile. An RNA binding; important for wobble base 34 recognition region spans residues 272–276 (TRHAR). The Zn(2+) site is built by Cys305, Cys307, Cys310, and His337.

It belongs to the queuine tRNA-ribosyltransferase family. In terms of assembly, homodimer. Within each dimer, one monomer is responsible for RNA recognition and catalysis, while the other monomer binds to the replacement base PreQ1. The cofactor is Zn(2+).

It catalyses the reaction 7-aminomethyl-7-carbaguanine + guanosine(34) in tRNA = 7-aminomethyl-7-carbaguanosine(34) in tRNA + guanine. It participates in tRNA modification; tRNA-queuosine biosynthesis. Functionally, catalyzes the base-exchange of a guanine (G) residue with the queuine precursor 7-aminomethyl-7-deazaguanine (PreQ1) at position 34 (anticodon wobble position) in tRNAs with GU(N) anticodons (tRNA-Asp, -Asn, -His and -Tyr). Catalysis occurs through a double-displacement mechanism. The nucleophile active site attacks the C1' of nucleotide 34 to detach the guanine base from the RNA, forming a covalent enzyme-RNA intermediate. The proton acceptor active site deprotonates the incoming PreQ1, allowing a nucleophilic attack on the C1' of the ribose to form the product. After dissociation, two additional enzymatic reactions on the tRNA convert PreQ1 to queuine (Q), resulting in the hypermodified nucleoside queuosine (7-(((4,5-cis-dihydroxy-2-cyclopenten-1-yl)amino)methyl)-7-deazaguanosine). In Xylella fastidiosa (strain Temecula1 / ATCC 700964), this protein is Queuine tRNA-ribosyltransferase.